Reading from the N-terminus, the 326-residue chain is Biotin synthase (326 aa).

A Radical SAM core domain is found at 41-271 (YHVQLASLLS…EARVRLSAGR (231 aa)). 3 residues coordinate [4Fe-4S] cluster: cysteine 56, cysteine 60, and cysteine 63. Cysteine 102, cysteine 134, cysteine 194, and arginine 266 together coordinate [2Fe-2S] cluster.

Belongs to the radical SAM superfamily. Biotin synthase family. Homodimer. The cofactor is [4Fe-4S] cluster. [2Fe-2S] cluster is required as a cofactor.

The catalysed reaction is (4R,5S)-dethiobiotin + (sulfur carrier)-SH + 2 reduced [2Fe-2S]-[ferredoxin] + 2 S-adenosyl-L-methionine = (sulfur carrier)-H + biotin + 2 5'-deoxyadenosine + 2 L-methionine + 2 oxidized [2Fe-2S]-[ferredoxin]. The protein operates within cofactor biosynthesis; biotin biosynthesis; biotin from 7,8-diaminononanoate: step 2/2. In terms of biological role, catalyzes the conversion of dethiobiotin (DTB) to biotin by the insertion of a sulfur atom into dethiobiotin via a radical-based mechanism. This is Biotin synthase from Synechococcus sp. (strain RCC307).